Here is a 184-residue protein sequence, read N- to C-terminus: Tumor necrosis factor alpha-induced protein 8-like protein 2 (184 aa).

Phosphoserine is present on Ser3.

The protein belongs to the TNFAIP8 family. TNFAIP8L2 subfamily. In terms of assembly, may interact with CASP8; however, such result is unclear since could not reproduce the interaction with CASP8. Interacts with RAC1. Post-translationally, phosphorylated by TAK1/MAP3K7; this phosphorylation triggers association with BTRC and subsequent ubiquitination and degradation. In terms of processing, ubiquitinated in a BTRC-depdent manner; leading to degradation mediated through the proteasome pathway.

Its subcellular location is the cytoplasm. The protein localises to the nucleus. It is found in the lysosome. Its function is as follows. Acts as a negative regulator of innate and adaptive immunity by maintaining immune homeostasis. Plays a regulatory role in the Toll-like signaling pathway by determining the strength of LPS-induced signaling and gene expression. Inhibits TCR-mediated T-cell activation and negatively regulate T-cell function to prevent hyperresponsiveness. Also inhibits autolysosome formation via negatively modulating MTOR activation by interacting with RAC1 and promoting the disassociation of the RAC1-MTOR complex. Plays an essential role in NK-cell biology by acting as a checkpoint and displaying an expression pattern correlating with NK-cell maturation process and by negatively regulating NK-cell maturation and antitumor immunity. Mechanistically, suppresses IL-15-triggered mTOR activity in NK-cells. The sequence is that of Tumor necrosis factor alpha-induced protein 8-like protein 2 (TNFAIP8L2) from Otolemur garnettii (Small-eared galago).